Reading from the N-terminus, the 726-residue chain is Elongation factor 2 (726 aa).

Residues 19–260 (DRIRNIGICA…MVIKHLPSPP (242 aa)) enclose the tr-type G domain. Residues 28–35 (AHIDHGKT), 94–98 (DTPGH), and 148–151 (NKVD) contribute to the GTP site. At histidine 602 the chain carries Diphthamide.

This sequence belongs to the TRAFAC class translation factor GTPase superfamily. Classic translation factor GTPase family. EF-G/EF-2 subfamily.

It localises to the cytoplasm. Functionally, catalyzes the GTP-dependent ribosomal translocation step during translation elongation. During this step, the ribosome changes from the pre-translocational (PRE) to the post-translocational (POST) state as the newly formed A-site-bound peptidyl-tRNA and P-site-bound deacylated tRNA move to the P and E sites, respectively. Catalyzes the coordinated movement of the two tRNA molecules, the mRNA and conformational changes in the ribosome. The protein is Elongation factor 2 (fusA) of Methanocaldococcus jannaschii (strain ATCC 43067 / DSM 2661 / JAL-1 / JCM 10045 / NBRC 100440) (Methanococcus jannaschii).